The sequence spans 383 residues: Aquaporin-5 (383 aa).

Residues 1–46 (MSVTTLNGQPTLNISGPGQTALSRLDPLKKVFTKFFSSIPQKVRGH) lie on the Cytoplasmic side of the membrane. The chain crosses the membrane as a helical span at residues 47–67 (VVAVIGELIGTTAFLFIAFSA). Over 68–93 (AEVALASANDNKGDKVSYETKSISTT) the chain is Extracellular. Residues 94 to 114 (QILFIAFGAGISLVVNAWTFF) form a helical membrane-spanning segment. Arginine 115 is a topological domain (cytoplasmic). The chain crosses the membrane as a helical span at residues 116 to 136 (ISGGLFDPAVSIALFFVGAID). Residues 122-124 (DPA) carry the NPA 1 motif. The Extracellular segment spans residues 137–140 (LTRC). A helical membrane pass occupies residues 141–161 (VLLCIAQCLGAIAASAMAYGL). Topologically, residues 162–180 (YHGGLHTATTLKPGMSPAQ) are cytoplasmic. The helical transmembrane segment at 181–201 (GVIVEMILTCQLCFTVLMLAA) threads the bilayer. Residues 202 to 207 (EKHEAT) lie on the Extracellular side of the membrane. The chain crosses the membrane as a helical span at residues 208-228 (FLAPLGIGLSVFIGELAGVFW). Over 229–252 (TGGSMNPARSLGPAVVTLSFPSYH) the chain is Cytoplasmic. Positions 234–236 (NPA) match the NPA 2 motif. A helical transmembrane segment spans residues 253–273 (WIYWVGPIAGAGLASIIYKLI). The Extracellular portion of the chain corresponds to 274–383 (KALEYETAQL…DGFFGEMYAD (110 aa)). The segment covering 332-349 (ARKSSSLVPTKSTKSGNS) has biased composition (polar residues). Positions 332–383 (ARKSSSLVPTKSTKSGNSEVKKTETVVEEPAKTQPKPAPAADDGFFGEMYAD) are disordered. Basic and acidic residues predominate over residues 350–362 (EVKKTETVVEEPA). Positions 363–372 (KTQPKPAPAA) are enriched in low complexity.

Belongs to the MIP/aquaporin (TC 1.A.8) family.

Its subcellular location is the membrane. The enzyme catalyses H2O(in) = H2O(out). Its function is as follows. Water channel required to facilitate the transport of water across membranes. May play a role in the vegetative growth. This chain is Aquaporin-5, found in Botryotinia fuckeliana (strain B05.10) (Noble rot fungus).